A 104-amino-acid chain; its full sequence is Replication restart protein PriB (104 aa).

The region spanning 2–101 (TNRLVLSGTV…LHAEQIELID (100 aa)) is the SSB domain. C48 and C80 form a disulfide bridge. The L45 loop motif lies at 82–89 (KAKNGLSK).

The protein belongs to the PriB family. Homodimer. Primosome assembly occurs via a 'hand-off' mechanism. PriA binds to replication forks, subsequently PriB then DnaT bind; DnaT then displaces ssDNA to generate the helicase loading substrate, which allows DnaC to load helicase DnaB onto the fork. ssDNA is displaced from the PriB-ssDNA complex by DnaT. In a PriA-PriB-replication fork structure, movement of the PriA CRR domain exposes a surface to which PriB binds and contacts ssDNA emerging from the PriA pore. Binds PriA; binding is improved in the presence of ssDNA. Weakly binds DnaT; binding is improved in the presence of ssDNA; as DnaT levels increase PriB dissociates from ssDNA. Component of the replication restart primosome, which is composed of PriA, PriB, PriC, DnaB and DnaT; DnaG primase associates transiently with this complex. Component of the preprimosomal complex composed of one monomer of PriC and DnaT, two monomers of PriA, two dimers of PriB and one hexamer of DnaB. An intersubunit disulfide bond is seen in some crystals.

Involved in the restart of stalled replication forks, which reloads the replicative helicase (DnaB) on sites other than the origin of replication; the PriA-PriB pathway is the major replication restart pathway. There are several restart pathways, the PriA-PriB pathway is subdivided into 2 distinct pathways. priB and priC have redundant roles in the cell. During primosome assembly it facilitates complex formation between PriA and DnaT on DNA; stabilizes PriA on DNA, presumably by preventing or inhibiting PriA DNA translocation activity. Forms a branched DNA-PriA-PriB complex when the lagging strand is single-stranded (ss)DNA. Binds ssDNA in the presence and absence of ssDNA DNA-binding protein (SSB), does not bind branched structures. DNA binding, forming spiral filaments on ssDNA, is cooperative. Stimulates the helicase activity of PriA. The homodimer binds 12 nucleotides of ssDNA. Binds homo-pyrimidine tracts better than homo-purine tracts. Functionally, genetic interactions among priB, dam, lexA, nagC, polA, rdgB, rdgB, rep and uup link the PriA-PriB replication restart pathway to DNA double-strand break repair. This is Replication restart protein PriB from Escherichia coli (strain K12).